The primary structure comprises 362 residues: DNA polymerase IV (362 aa).

One can recognise a UmuC domain in the interval 6-187; that stretch reads IIHVDMDAFY…LPVSSFHGVG (182 aa). Mg(2+) contacts are provided by Asp10 and Asp105. The active site involves Glu106.

It belongs to the DNA polymerase type-Y family. As to quaternary structure, monomer. It depends on Mg(2+) as a cofactor.

The protein localises to the cytoplasm. The enzyme catalyses DNA(n) + a 2'-deoxyribonucleoside 5'-triphosphate = DNA(n+1) + diphosphate. Functionally, poorly processive, error-prone DNA polymerase involved in untargeted mutagenesis. Copies undamaged DNA at stalled replication forks, which arise in vivo from mismatched or misaligned primer ends. These misaligned primers can be extended by PolIV. Exhibits no 3'-5' exonuclease (proofreading) activity. May be involved in translesional synthesis, in conjunction with the beta clamp from PolIII. The chain is DNA polymerase IV from Leptospira interrogans serogroup Icterohaemorrhagiae serovar Lai (strain 56601).